The sequence spans 345 residues: Ribosomal RNA large subunit methyltransferase F (345 aa).

Polar residues predominate over residues Met1–Asn14. Disordered stretches follow at residues Met1 to His35 and Glu225 to Gln258. Basic residues predominate over residues Arg229 to Gly239. Over residues Ile246–Gln258 the composition is skewed to polar residues.

Belongs to the methyltransferase superfamily. METTL16/RlmF family.

It is found in the cytoplasm. It carries out the reaction adenosine(1618) in 23S rRNA + S-adenosyl-L-methionine = N(6)-methyladenosine(1618) in 23S rRNA + S-adenosyl-L-homocysteine + H(+). Functionally, specifically methylates the adenine in position 1618 of 23S rRNA. The chain is Ribosomal RNA large subunit methyltransferase F from Psychrobacter arcticus (strain DSM 17307 / VKM B-2377 / 273-4).